We begin with the raw amino-acid sequence, 236 residues long: MTKNIVNTALVLVGAGSLLTGCNFEQPETNCFVQESPSWAVKYDVVDSPKDANGDECTTTAPLVELMGVYKYVNPETGAAQLALRPATLASRAIADTTTTSADQTSLGSLDTEPKDHGFCHANDFAPAFVNVAASDTAAANTIRYEFTNVRVYSAAVAPGTQFTGELKYTSNGCTSSYVMRAVWPPAPCDTASTEPAENCGVGSGLNPEFAVVCQPTSATGTTGYCVPAGDIPSFK.

An N-terminal signal peptide occupies residues 1–21; that stretch reads MTKNIVNTALVLVGAGSLLTG. Residue cysteine 22 is the site of N-palmitoyl cysteine attachment. Residue cysteine 22 is the site of S-diacylglycerol cysteine attachment.

It is found in the cell membrane. The polypeptide is Putative lipoprotein MlpA (mlpA) (Myxococcus xanthus).